The sequence spans 284 residues: Asialoglycoprotein receptor 1 (284 aa).

Residues 1–18 (MTKDYQDFQHLDNDNDHH) show a composition bias toward basic and acidic residues. The disordered stretch occupies residues 1–25 (MTKDYQDFQHLDNDNDHHQLRRGPP). Over 1–39 (MTKDYQDFQHLDNDNDHHQLRRGPPPTPRLLQRLCSGSR) the chain is Cytoplasmic. The Endocytosis signal motif lies at 5 to 8 (YQDF). Cys-35 carries the S-palmitoyl cysteine lipid modification. A helical; Signal-anchor for type II membrane protein transmembrane segment spans residues 40–60 (LLLLSSSLSILLLVVVCVITS). A coiled-coil region spans residues 59-117 (TSQNSQLREDLLALRQNFSNLTVSTEDQVKALSTQGSSVGRKMKLVESKLEKQQKDLTE). Residues 61–284 (QNSQLREDLL…VCETKLDKAN (224 aa)) are Extracellular-facing. Residues Asn-75, Asn-78, and Asn-146 are each glycosylated (N-linked (GlcNAc...) asparagine). Disulfide bonds link Cys-153–Cys-164, Cys-181–Cys-276, and Cys-254–Cys-268. The C-type lectin domain occupies 160-277 (YEGSCYWFSS…CRRPYRWVCE (118 aa)). Residues Val-190, Glu-196, Asp-215, Gln-239, Asp-241, Glu-252, Asp-253, Asn-264, Asp-265, and Glu-277 each coordinate Ca(2+).

In terms of assembly, interacts with LASS2. Phosphorylated on a cytoplasmic Ser residue. In terms of tissue distribution, expressed exclusively in hepatic parenchymal cells.

It is found in the membrane. In terms of biological role, mediates the endocytosis of plasma glycoproteins to which the terminal sialic acid residue on their complex carbohydrate moieties has been removed. The receptor recognizes terminal galactose and N-acetylgalactosamine units. After ligand binding to the receptor, the resulting complex is internalized and transported to a sorting organelle, where receptor and ligand are disassociated. The receptor then returns to the cell membrane surface. This chain is Asialoglycoprotein receptor 1 (Asgr1), found in Mus musculus (Mouse).